Reading from the N-terminus, the 492-residue chain is MHKLEDLKFINSYARLPEAFHDRPMPAPFPQPYRVAFNEKAAALIGLHPEEASRAEFVNAFTGQIPLTGMEPVSMIYAGHQFGVYVPQLGDGRALVLGEVQTPEGARWELQLKGSGPTRFSRGADGRAVLRSTIREYLASEAMHALGVPTTRALTILGSDMPVYRERVETAAILVRMAPSHVRFGSFEYFAHGGYPARLKELADYVIAHHYPELAERYQPYLALLETVIRRTADLIARWQAVGFAHGVMNTDNMSILGLTIDYGPYGFLDAYQPGFICNHSDHRGRYAFDQQPRIAWWNLACLAQALLPLLHEDEAAGVELARAALDRFNGQFASCWTALMGAKLGLLETRREDLDLIERLLGLMAGSAVDYTRFFRALGRFHDPAWLPDLRAAFRDPEAFDAWLADYRARLGHEGREDAARLADMLAVNPKYVLRNYLAQMAIAKAEQKDFSEVERLQRLLERPFDEQPEMEAYAALPPDWAEEIAVSCSS.

Gly-90, Gly-92, Arg-93, Lys-113, Asp-125, Gly-126, Arg-176, and Arg-183 together coordinate ATP. The active-site Proton acceptor is the Asp-252. Mg(2+) contacts are provided by Asn-253 and Asp-262. Asp-262 serves as a coordination point for ATP.

This sequence belongs to the SELO family. The cofactor is Mg(2+). Mn(2+) serves as cofactor.

The enzyme catalyses L-seryl-[protein] + ATP = 3-O-(5'-adenylyl)-L-seryl-[protein] + diphosphate. It carries out the reaction L-threonyl-[protein] + ATP = 3-O-(5'-adenylyl)-L-threonyl-[protein] + diphosphate. The catalysed reaction is L-tyrosyl-[protein] + ATP = O-(5'-adenylyl)-L-tyrosyl-[protein] + diphosphate. It catalyses the reaction L-histidyl-[protein] + UTP = N(tele)-(5'-uridylyl)-L-histidyl-[protein] + diphosphate. The enzyme catalyses L-seryl-[protein] + UTP = O-(5'-uridylyl)-L-seryl-[protein] + diphosphate. It carries out the reaction L-tyrosyl-[protein] + UTP = O-(5'-uridylyl)-L-tyrosyl-[protein] + diphosphate. Functionally, nucleotidyltransferase involved in the post-translational modification of proteins. It can catalyze the addition of adenosine monophosphate (AMP) or uridine monophosphate (UMP) to a protein, resulting in modifications known as AMPylation and UMPylation. The polypeptide is Protein nucleotidyltransferase YdiU (Thioalkalivibrio sulfidiphilus (strain HL-EbGR7)).